A 219-amino-acid polypeptide reads, in one-letter code: Ribosomal RNA small subunit methyltransferase Nep1 (219 aa).

Residues G178, G183, and 196–201 (LYKAPL) each bind S-adenosyl-L-methionine.

It belongs to the class IV-like SAM-binding methyltransferase superfamily. RNA methyltransferase NEP1 family. In terms of assembly, homodimer.

The catalysed reaction is a pseudouridine in rRNA + S-adenosyl-L-methionine = an N(1)-methylpseudouridine in rRNA + S-adenosyl-L-homocysteine + H(+). In terms of biological role, methyltransferase involved in ribosomal biogenesis. Specifically catalyzes the N1-methylation of the pseudouridine corresponding to position 914 in M.jannaschii 16S rRNA. This is Ribosomal RNA small subunit methyltransferase Nep1 from Thermococcus onnurineus (strain NA1).